We begin with the raw amino-acid sequence, 628 residues long: NUAK family SNF1-like kinase 2 (628 aa).

Met1 carries the post-translational modification N-acetylmethionine. The Protein kinase domain occupies 53–303; that stretch reads YEFLETLGKG…LEDVASHWWV (251 aa). Residues 59–67 and Lys81 contribute to the ATP site; that span reads LGKGTYGKV. The Proton acceptor role is filled by Asp175. Thr208 is subject to Phosphothreonine. Disordered regions lie at residues 355–492 and 522–570; these read KQHA…PQAS and GSLD…PLRG. Residues 428–444 are compositionally biased toward pro residues; sequence ELSPIPVSPGQAAPPLP. Position 435 is a phosphoserine (Ser435). A compositionally biased stretch (low complexity) spans 457–469; that stretch reads SGYYSSPEPSESG. A phosphoserine mark is found at Ser523, Ser544, Ser547, and Ser573.

Belongs to the protein kinase superfamily. CAMK Ser/Thr protein kinase family. SNF1 subfamily. The cofactor is Mg(2+). Post-translationally, phosphorylated at Thr-208 by STK11/LKB1 in complex with STE20-related adapter-alpha (STRADA) pseudo kinase and CAB39. Autophosphorylation is also possible at Thr-208.

The enzyme catalyses L-seryl-[protein] + ATP = O-phospho-L-seryl-[protein] + ADP + H(+). It carries out the reaction L-threonyl-[protein] + ATP = O-phospho-L-threonyl-[protein] + ADP + H(+). Activated by phosphorylation on Thr-208. Functionally, stress-activated kinase involved in tolerance to glucose starvation. Induces cell-cell detachment by increasing F-actin conversion to G-actin. Expression is induced by CD95 or TNF-alpha, via NF-kappa-B. Protects cells from CD95-mediated apoptosis and is required for the increased motility and invasiveness of CD95-activated tumor cells. Phosphorylates LATS1 and LATS2. Plays a key role in neural tube closure during embryonic development through LATS2 phosphorylation and regulation of the nuclear localization of YAP1 a critical downstream regulatory target in the Hippo signaling pathway. The protein is NUAK family SNF1-like kinase 2 of Pongo abelii (Sumatran orangutan).